We begin with the raw amino-acid sequence, 207 residues long: 8-oxoguanine DNA glycosylase/AP lyase (207 aa).

Active-site residues include lysine 129 and aspartate 147.

It belongs to the type-2 OGG1 family.

It carries out the reaction 2'-deoxyribonucleotide-(2'-deoxyribose 5'-phosphate)-2'-deoxyribonucleotide-DNA = a 3'-end 2'-deoxyribonucleotide-(2,3-dehydro-2,3-deoxyribose 5'-phosphate)-DNA + a 5'-end 5'-phospho-2'-deoxyribonucleoside-DNA + H(+). In terms of biological role, catalyzes the excision of an oxidatively damaged form of guanine (7,8-dihydro-8-oxoguanine = 8-oxoG) from DNA. Also cleaves the DNA backbone at apurinic/apyrimidinic sites (AP sites). Has little specificity for the base opposite oxoG. This is 8-oxoguanine DNA glycosylase/AP lyase from Methanocaldococcus jannaschii (strain ATCC 43067 / DSM 2661 / JAL-1 / JCM 10045 / NBRC 100440) (Methanococcus jannaschii).